Reading from the N-terminus, the 100-residue chain is Elicitin Vex2 (100 aa).

Intrachain disulfides connect Cys3–Cys71, Cys27–Cys56, and Cys51–Cys95.

This sequence belongs to the elicitin family.

The protein resides in the secreted. Induces local and distal defense responses (incompatible hypersensitive reaction) in plants from the solanaceae and cruciferae families. Elicits leaf necrosis and causes the accumulation of pathogenesis-related proteins. Might interact with the lipidic molecules of the plasma membrane. The sequence is that of Elicitin Vex2 from Phytopythium vexans (Damping-off fungus).